Consider the following 88-residue polypeptide: Class II hydrophobin 1 (88 aa).

Positions 1-15 are cleaved as a signal peptide; that stretch reads MKFFIATIFATGALA. Cystine bridges form between cysteine 19–cysteine 69, cysteine 29–cysteine 59, cysteine 30–cysteine 42, and cysteine 70–cysteine 81.

Belongs to the cerato-ulmin hydrophobin family. Homodimer. Homodimers further self-assemble to form highly ordered films at water-air interfaces through intermolecular interactions.

Its subcellular location is the secreted. It localises to the cell wall. Its function is as follows. Aerial growth, conidiation, and dispersal of filamentous fungi in the environment rely upon a capability of their secreting small amphipathic proteins called hydrophobins (HPBs) with low sequence identity. Class I can self-assemble into an outermost layer of rodlet bundles on aerial cell surfaces, conferring cellular hydrophobicity that supports fungal growth, development and dispersal; whereas Class II form highly ordered films at water-air interfaces through intermolecular interactions but contribute nothing to the rodlet structure. This Trichoderma asperellum (strain ATCC 204424 / CBS 433.97 / NBRC 101777) protein is Class II hydrophobin 1.